Here is a 213-residue protein sequence, read N- to C-terminus: ATP phosphoribosyltransferase (213 aa).

It belongs to the ATP phosphoribosyltransferase family. Short subfamily. As to quaternary structure, heteromultimer composed of HisG and HisZ subunits.

Its subcellular location is the cytoplasm. It carries out the reaction 1-(5-phospho-beta-D-ribosyl)-ATP + diphosphate = 5-phospho-alpha-D-ribose 1-diphosphate + ATP. It participates in amino-acid biosynthesis; L-histidine biosynthesis; L-histidine from 5-phospho-alpha-D-ribose 1-diphosphate: step 1/9. Its function is as follows. Catalyzes the condensation of ATP and 5-phosphoribose 1-diphosphate to form N'-(5'-phosphoribosyl)-ATP (PR-ATP). Has a crucial role in the pathway because the rate of histidine biosynthesis seems to be controlled primarily by regulation of HisG enzymatic activity. The protein is ATP phosphoribosyltransferase of Listeria welshimeri serovar 6b (strain ATCC 35897 / DSM 20650 / CCUG 15529 / CIP 8149 / NCTC 11857 / SLCC 5334 / V8).